Here is a 283-residue protein sequence, read N- to C-terminus: 4-diphosphocytidyl-2-C-methyl-D-erythritol kinase (283 aa).

Lys10 is a catalytic residue. Position 99-109 (99-109) interacts with ATP; it reads PMGGGLGGGSS. The active site involves Asp141.

It belongs to the GHMP kinase family. IspE subfamily. As to quaternary structure, homodimer.

It carries out the reaction 4-CDP-2-C-methyl-D-erythritol + ATP = 4-CDP-2-C-methyl-D-erythritol 2-phosphate + ADP + H(+). It participates in isoprenoid biosynthesis; isopentenyl diphosphate biosynthesis via DXP pathway; isopentenyl diphosphate from 1-deoxy-D-xylulose 5-phosphate: step 3/6. Functionally, catalyzes the phosphorylation of the position 2 hydroxy group of 4-diphosphocytidyl-2C-methyl-D-erythritol. This is 4-diphosphocytidyl-2-C-methyl-D-erythritol kinase from Salmonella paratyphi C (strain RKS4594).